Reading from the N-terminus, the 642-residue chain is Chaperone protein HtpG (642 aa).

Positions 1–350 (MATDTQKETL…SNDLSLNVSR (350 aa)) are a; substrate-binding. Residues 351–567 (EILQNDHAVD…EYDMGLQMRR (217 aa)) form a b region. Residues 568 to 642 (LLEQAGQKLP…MNKLIVQLSK (75 aa)) form a c region.

Belongs to the heat shock protein 90 family. In terms of assembly, homodimer.

The protein resides in the cytoplasm. Functionally, molecular chaperone. Has ATPase activity. This Marinomonas sp. (strain MWYL1) protein is Chaperone protein HtpG.